The primary structure comprises 651 residues: Beta-glucuronidase (651 aa).

The first 22 residues, methionine 1–glycine 22, serve as a signal peptide directing secretion. N-linked (GlcNAc...) asparagine glycans are attached at residues asparagine 173, asparagine 272, and asparagine 420. Glutamate 451 serves as the catalytic Proton donor. Asparagine 631 is a glycosylation site (N-linked (GlcNAc...) asparagine).

This sequence belongs to the glycosyl hydrolase 2 family. In terms of assembly, homotetramer. N-linked glycosylated with 3 to 4 oligosaccharide chains.

The protein resides in the lysosome. The catalysed reaction is a beta-D-glucuronoside + H2O = D-glucuronate + an alcohol. Inhibited by L-aspartic acid. In terms of biological role, plays an important role in the degradation of dermatan and keratan sulfates. In Homo sapiens (Human), this protein is Beta-glucuronidase (GUSB).